Consider the following 91-residue polypeptide: MSETTEINPAARRTAVGARRPFYRRRKSCPFSGPNAPKIDYKDVRLLSRFLSERGKIVPSRITAVSAKKQRELAQAIKRARFMALLPYIVG.

Belongs to the bacterial ribosomal protein bS18 family. In terms of assembly, part of the 30S ribosomal subunit. Forms a tight heterodimer with protein bS6.

Its function is as follows. Binds as a heterodimer with protein bS6 to the central domain of the 16S rRNA, where it helps stabilize the platform of the 30S subunit. The chain is Small ribosomal subunit protein bS18 from Gluconacetobacter diazotrophicus (strain ATCC 49037 / DSM 5601 / CCUG 37298 / CIP 103539 / LMG 7603 / PAl5).